We begin with the raw amino-acid sequence, 146 residues long: uncharacterized protein (146 aa).

An N-terminal signal peptide occupies residues 1 to 17; sequence MKRLLILTALLPFVGFA. Disordered regions lie at residues 27-54 and 70-146; these read NQPGYQIPSQQRMQTQMQTQQIQQKGML and ENQI…TIGP. Residues 32-54 are compositionally biased toward low complexity; sequence QIPSQQRMQTQMQTQQIQQKGML. Residues 77–118 are compositionally biased toward polar residues; the sequence is SQRVLQSQPGERNPARQQMLPNTNGGMLNSNRNPDSSLNQQH.

This is an uncharacterized protein from Escherichia coli (strain K12).